Reading from the N-terminus, the 143-residue chain is Meiotically up-regulated gene 128 protein (143 aa).

In terms of biological role, has a role in meiosis. The protein is Meiotically up-regulated gene 128 protein (mug128) of Schizosaccharomyces pombe (strain 972 / ATCC 24843) (Fission yeast).